We begin with the raw amino-acid sequence, 260 residues long: Acetylglutamate kinase (260 aa).

Substrate contacts are provided by residues 46-47 (GG), R68, and N160.

It belongs to the acetylglutamate kinase family. ArgB subfamily.

It is found in the cytoplasm. It catalyses the reaction N-acetyl-L-glutamate + ATP = N-acetyl-L-glutamyl 5-phosphate + ADP. It functions in the pathway amino-acid biosynthesis; L-arginine biosynthesis; N(2)-acetyl-L-ornithine from L-glutamate: step 2/4. Catalyzes the ATP-dependent phosphorylation of N-acetyl-L-glutamate. This Shewanella baltica (strain OS223) protein is Acetylglutamate kinase.